The following is a 475-amino-acid chain: tRNA modification GTPase MnmE (475 aa).

Positions 24, 81, and 124 each coordinate (6S)-5-formyl-5,6,7,8-tetrahydrofolate. The region spanning 220 to 397 (GLSVVLAGQP…LRRELLRLVG (178 aa)) is the TrmE-type G domain. A K(+)-binding site is contributed by asparagine 230. GTP-binding positions include 230-235 (NVGKSS), 249-255 (TPIAGTT), 274-277 (DTAG), and 378-380 (SAR). Serine 234 lines the Mg(2+) pocket. Threonine 249, isoleucine 251, and threonine 254 together coordinate K(+). Threonine 255 contacts Mg(2+). (6S)-5-formyl-5,6,7,8-tetrahydrofolate is bound at residue lysine 475.

This sequence belongs to the TRAFAC class TrmE-Era-EngA-EngB-Septin-like GTPase superfamily. TrmE GTPase family. As to quaternary structure, homodimer. Heterotetramer of two MnmE and two MnmG subunits. It depends on K(+) as a cofactor.

It is found in the cytoplasm. Exhibits a very high intrinsic GTPase hydrolysis rate. Involved in the addition of a carboxymethylaminomethyl (cmnm) group at the wobble position (U34) of certain tRNAs, forming tRNA-cmnm(5)s(2)U34. The chain is tRNA modification GTPase MnmE from Cupriavidus necator (strain ATCC 17699 / DSM 428 / KCTC 22496 / NCIMB 10442 / H16 / Stanier 337) (Ralstonia eutropha).